The sequence spans 302 residues: Methionyl-tRNA formyltransferase (302 aa).

Residue Ser108–Pro111 coordinates (6S)-5,6,7,8-tetrahydrofolate.

This sequence belongs to the Fmt family.

It catalyses the reaction L-methionyl-tRNA(fMet) + (6R)-10-formyltetrahydrofolate = N-formyl-L-methionyl-tRNA(fMet) + (6S)-5,6,7,8-tetrahydrofolate + H(+). Attaches a formyl group to the free amino group of methionyl-tRNA(fMet). The formyl group appears to play a dual role in the initiator identity of N-formylmethionyl-tRNA by promoting its recognition by IF2 and preventing the misappropriation of this tRNA by the elongation apparatus. The sequence is that of Methionyl-tRNA formyltransferase from Nitratiruptor sp. (strain SB155-2).